The primary structure comprises 1789 residues: Mediator of RNA polymerase II transcription subunit 12 (1789 aa).

Disordered regions lie at residues 1 to 138 (MTSR…QRRG), 156 to 288 (SSPT…GSSA), 1592 to 1656 (IGTA…GWHA), and 1707 to 1727 (THLN…NPTR). 2 stretches are compositionally biased toward low complexity: residues 25 to 66 (SQQR…QQQQ) and 81 to 98 (TRNN…TLNN). The segment covering 107–124 (QDPTSIVSPADPSGSSPA) has biased composition (polar residues). Positions 220–229 (AVPDHSRREQ) are enriched in basic and acidic residues. Composition is skewed to low complexity over residues 271-288 (RSSA…GSSA), 1592-1628 (IGTA…SAVS), 1647-1656 (QQAQAQGWHA), and 1707-1716 (THLNLGNNSN).

It belongs to the Mediator complex subunit 12 family. As to quaternary structure, component of the srb8-11 complex, which itself associates with the Mediator complex.

It is found in the nucleus. Component of the srb8-11 complex. The srb8-11 complex is a regulatory module of the Mediator complex which is itself involved in regulation of basal and activated RNA polymerase II-dependent transcription. The srb8-11 complex may be involved in the transcriptional repression of a subset of genes regulated by Mediator. It may inhibit the association of the Mediator complex with RNA polymerase II to form the holoenzyme complex. In Neurospora crassa (strain ATCC 24698 / 74-OR23-1A / CBS 708.71 / DSM 1257 / FGSC 987), this protein is Mediator of RNA polymerase II transcription subunit 12 (srb8).